The chain runs to 418 residues: Gamma-glutamyl phosphate reductase (418 aa).

This sequence belongs to the gamma-glutamyl phosphate reductase family.

It is found in the cytoplasm. The enzyme catalyses L-glutamate 5-semialdehyde + phosphate + NADP(+) = L-glutamyl 5-phosphate + NADPH + H(+). The protein operates within amino-acid biosynthesis; L-proline biosynthesis; L-glutamate 5-semialdehyde from L-glutamate: step 2/2. Catalyzes the NADPH-dependent reduction of L-glutamate 5-phosphate into L-glutamate 5-semialdehyde and phosphate. The product spontaneously undergoes cyclization to form 1-pyrroline-5-carboxylate. This is Gamma-glutamyl phosphate reductase from Geotalea uraniireducens (strain Rf4) (Geobacter uraniireducens).